A 446-amino-acid polypeptide reads, in one-letter code: NADH-ubiquinone oxidoreductase chain 4 (446 aa).

Transmembrane regions (helical) follow at residues 4–24, 28–48, 56–76, 88–105, 109–131, 141–161, 182–202, 218–238, 245–265, 272–292, 297–317, 330–350, 373–393, and 426–446; these read LILMMIFISPICFMQGLFWMV, LFVITFVLILMNFCLNYFVNI, VLSYGLILLSFWICSLMIVAS, LFLFNVLMLLIFLVLTFS, LFMFYLFFESSLIPTLFLILGWG, VYLLFYTLLVSLPLLVGIFYL, LLYLAMILAFLVKMPMFLVHL, ILAGIMLKLGGYGLLAVFSFL, YNYIWVSISLIGGVLISLVCL, ALIAYSSVAHMGIVLGGLMTL, LSGSYTLMIGHGLCSSGLFCL, LLINKGLLNFMPSMTLWWFLL, IVSWSWLTMISLSFLSFFSAA, and FLHWFPLNLLILKSEVCLFWI.

The protein belongs to the complex I subunit 4 family.

It localises to the mitochondrion membrane. It carries out the reaction a ubiquinone + NADH + 5 H(+)(in) = a ubiquinol + NAD(+) + 4 H(+)(out). In terms of biological role, core subunit of the mitochondrial membrane respiratory chain NADH dehydrogenase (Complex I) that is believed to belong to the minimal assembly required for catalysis. Complex I functions in the transfer of electrons from NADH to the respiratory chain. The immediate electron acceptor for the enzyme is believed to be ubiquinone. This Ceratitis capitata (Mediterranean fruit fly) protein is NADH-ubiquinone oxidoreductase chain 4 (ND4).